The following is a 98-amino-acid chain: Citrate lyase acyl carrier protein (98 aa).

Ser-14 carries the post-translational modification O-(phosphoribosyl dephospho-coenzyme A)serine.

The protein belongs to the CitD family. As to quaternary structure, oligomer with a subunit composition of (alpha,beta,gamma)6.

The protein resides in the cytoplasm. Functionally, covalent carrier of the coenzyme of citrate lyase. This is Citrate lyase acyl carrier protein from Shigella boydii serotype 18 (strain CDC 3083-94 / BS512).